Consider the following 689-residue polypeptide: uncharacterized protein (689 aa).

Disordered regions lie at residues 121-206, 286-305, 322-414, and 552-611; these read LALK…VDPS, ASSN…PMDN, NSYS…SMAH, and AAMP…HLSD. The span at 133-158 shows a compositional bias: low complexity; it reads SPNNSIPLMANSCLLSADNSSSSTTS. The segment covering 322–380 has biased composition (polar residues); the sequence is NSYSYDRYTPNQPSYLESKPGNHQPSYTSEQPMYSTASVPQQISNGPTAVNGLPMNSYT. Composition is skewed to low complexity over residues 381-411 and 560-572; these read PHSN…SSPS and PSAH…PSPH.

It localises to the cytoplasm. This is an uncharacterized protein from Schizosaccharomyces pombe (strain 972 / ATCC 24843) (Fission yeast).